A 119-amino-acid chain; its full sequence is RNA guanine-N7 methyltransferase activating subunit (119 aa).

The segment at 1–55 (MSDTSEEIPNFEEMFASRFTKDDKEYQEYLKRPPESPPIVEEWNSRAGGNQRNRG) is interaction with RNMT. Positions 30 to 119 (LKRPPESPPI…HNQRPPYGYY (90 aa)) are disordered. S36 carries the phosphoserine modification. The short motif at 36–42 (SPPIVEE) is the RNMT-activating domain element. Over residues 47–61 (AGGNQRNRGNWLQDN) the composition is skewed to polar residues. Residues 56-119 (NWLQDNRQFR…HNQRPPYGYY (64 aa)) form an RNA-binding region. The segment covering 62–73 (RQFRGRDNRRGW) has biased composition (basic and acidic residues). An Omega-N-methylarginine modification is found at R85. S86 carries the phosphoserine modification. Low complexity predominate over residues 89 to 112 (NNNYPQQRPEPYYQQQYTQYGHNQ).

Belongs to the RAM family. In terms of assembly, interacts with RNMT; this interaction enhances mRNA binding and cap methyltransferase activity.

Its subcellular location is the nucleus. Regulatory subunit of the mRNA-capping methyltransferase RNMT:RAMAC complex that methylates the N7 position of the added guanosine to the 5'-cap structure of mRNAs. Promotes the recruitment of the methyl donor, S-adenosyl-L-methionine, to RNMT. Regulates RNMT expression by a post-transcriptional stabilizing mechanism. Binds RNA. The chain is RNA guanine-N7 methyltransferase activating subunit (Ramac) from Mus musculus (Mouse).